Consider the following 631-residue polypeptide: PTS system beta-glucoside-specific EIIBCA component (631 aa).

Residues 1–86 enclose the PTS EIIB type-1 domain; that stretch reads MNYETLASEI…LSLDGMARFS (86 aa). Residue Cys-26 is the Phosphocysteine intermediate; for EIIB activity of the active site. The PTS EIIC type-1 domain maps to 105 to 466; sequence DIISSIFTPF…DETQPAAADS (362 aa). Helical transmembrane passes span 120–140, 146–166, 175–195, 206–226, 248–268, 295–315, 328–348, 358–378, 385–405, and 434–454; these read ATGI…ISES, LLFA…GYTA, FTTL…AFNA, FLGI…ILFA, FFTP…LIGP, VMGA…FVPL, LLPL…GVLL, IAGS…VYGV, PFIF…YAHT, and AVIG…SFGV. The PTS EIIA type-1 domain maps to 501-605; that stretch reads DRTFASGVMG…DLTTPIVITN (105 aa). His-553 serves as the catalytic Tele-phosphohistidine intermediate; for EIIA activity.

It localises to the cell inner membrane. The phosphoenolpyruvate-dependent sugar phosphotransferase system (sugar PTS), a major carbohydrate active -transport system, catalyzes the phosphorylation of incoming sugar substrates concomitantly with their translocation across the cell membrane. This system is involved in beta-glucoside transport. In terms of biological role, acts both as a kinase and as a phosphatase on ArbG. This chain is PTS system beta-glucoside-specific EIIBCA component (arbF), found in Dickeya chrysanthemi (Pectobacterium chrysanthemi).